Consider the following 83-residue polypeptide: RNA-binding protein Hfq (83 aa).

The region spanning 10-69 is the Sm domain; it reads DPFLNALRREHVPVSIYLVNGIKLQGQIESFDQYVVLLRNTVTQMVYKHAISTIVPGRAV.

It belongs to the Hfq family. As to quaternary structure, homohexamer.

Functionally, RNA chaperone that binds small regulatory RNA (sRNAs) and mRNAs to facilitate mRNA translational regulation in response to envelope stress, environmental stress and changes in metabolite concentrations. Also binds with high specificity to tRNAs. The polypeptide is RNA-binding protein Hfq (Paracidovorax citrulli (strain AAC00-1) (Acidovorax citrulli)).